A 95-amino-acid chain; its full sequence is Phospholipase A2 inhibitor gammaCdcPLI (95 aa).

4 disulfides stabilise this stretch: Cys2/Cys26, Cys5/Cys12, Cys19/Cys30, and Cys61/Cys77.

Forms dimers or higher order oligomers in a temperature-dependent manner in vitro. In terms of tissue distribution, expressed by the liver.

It is found in the secreted. Functionally, inhibits the enzymatic activity of basic and acidic PLA2 from B.jararacussu and B.pauloensis, respectively, in a dose-dependent manner. Also inhibits myotoxicity and cytotoxicity of BnSp-7 of B.pauloensis. The sequence is that of Phospholipase A2 inhibitor gammaCdcPLI from Crotalus durissus collilineatus (Brazilian rattlesnake).